Consider the following 630-residue polypeptide: Biosynthetic arginine decarboxylase (630 aa).

N6-(pyridoxal phosphate)lysine is present on lysine 99. 281–291 (VDIGGGLGVDY) contributes to the substrate binding site.

It belongs to the Orn/Lys/Arg decarboxylase class-II family. SpeA subfamily. It depends on Mg(2+) as a cofactor. Pyridoxal 5'-phosphate serves as cofactor.

The enzyme catalyses L-arginine + H(+) = agmatine + CO2. It participates in amine and polyamine biosynthesis; agmatine biosynthesis; agmatine from L-arginine: step 1/1. Functionally, catalyzes the biosynthesis of agmatine from arginine. In Bacteroides fragilis (strain ATCC 25285 / DSM 2151 / CCUG 4856 / JCM 11019 / LMG 10263 / NCTC 9343 / Onslow / VPI 2553 / EN-2), this protein is Biosynthetic arginine decarboxylase.